The following is a 305-amino-acid chain: Methionyl-tRNA formyltransferase (305 aa).

111-114 serves as a coordination point for (6S)-5,6,7,8-tetrahydrofolate; that stretch reads SLLP.

It belongs to the Fmt family.

The catalysed reaction is L-methionyl-tRNA(fMet) + (6R)-10-formyltetrahydrofolate = N-formyl-L-methionyl-tRNA(fMet) + (6S)-5,6,7,8-tetrahydrofolate + H(+). Its function is as follows. Attaches a formyl group to the free amino group of methionyl-tRNA(fMet). The formyl group appears to play a dual role in the initiator identity of N-formylmethionyl-tRNA by promoting its recognition by IF2 and preventing the misappropriation of this tRNA by the elongation apparatus. The chain is Methionyl-tRNA formyltransferase from Campylobacter jejuni subsp. jejuni serotype O:6 (strain 81116 / NCTC 11828).